The sequence spans 492 residues: Trichothecene C-15 hydroxylase (492 aa).

A helical membrane pass occupies residues 6 to 26; that stretch reads LWPLLALSGGTGLAYLVVVVV. A compositionally biased stretch (basic and acidic residues) spans 88–106; the sequence is AMKDVRGHRKSGEPEHGKD. A disordered region spans residues 88–116; it reads AMKDVRGHRKSGEPEHGKDPISVQSNGDN. N-linked (GlcNAc...) asparagine glycosylation is found at Asn124, Asn198, and Asn290. Cys438 contributes to the heme binding site.

Belongs to the cytochrome P450 family. It depends on heme as a cofactor.

It is found in the membrane. It functions in the pathway sesquiterpene biosynthesis; trichothecene biosynthesis. Trichothecene C-15 hydroxylase; part of the core gene cluster that mediates the biosynthesis of trichothecenes, a very large family of chemically related bicyclic sesquiterpene compounds acting as mycotoxins, including T2-toxin. The biosynthesis of trichothecenes begins with the cyclization of farnesyl diphosphate to trichodiene and is catalyzed by the trichodiene synthase TRI5. Trichodiene undergoes a series of oxygenations catalyzed by the cytochrome P450 monooxygenase TRI4. TRI4 controls the addition of four oxygens at C-2, C-3, C-11, and the C-12, C-13-epoxide to form the intermediate isotrichotriol. Isotrichotriol then undergoes a non-enzymatic isomerization and cyclization to form isotrichodermol. During this process, the oxygen at the C-2 position becomes the pyran ring oxygen and the hydroxyl group at C-11 is lost. More complex type A trichothecenes are built by modifying isotrichodermol through a series of paired hydroxylation and acetylation or acylation steps. Isotrichodermol is converted to isotrichodermin by the acetyltransferase TRI101. TRI101 encodes a C-3 transacetylase that acts as a self-protection or resistance factor during biosynthesis and that the presence of a free C-3 hydroxyl group is a key component of Fusarium trichothecene phytotoxicity. A second hydroxyl group is added to C-15 by the trichothecene C-15 hydroxylase TRI11, producing 15-decalonectrin, which is then acetylated by TRI3, producing calonectrin. A third hydroxyl group is added at C-4 by the cytochrome P450 monooxygenase TRI13, converting calonectrin to 3,15-diacetoxyspirpenol, which is subsequently acetylated by the acetyltransferase TRI7. A fourth hydroxyl group is added to C-8 by the cytochrome P450 monooxygenase TRI1, followed by the addition of an isovaleryl moiety by TRI16. Finally, the acetyl group is removed from the C-3 position by the trichothecene C-3 esterase TRI8 to produce T-2 toxin. The protein is Trichothecene C-15 hydroxylase of Fusarium sporotrichioides.